A 359-amino-acid chain; its full sequence is UDP-N-acetylglucosamine--N-acetylmuramyl-(pentapeptide) pyrophosphoryl-undecaprenol N-acetylglucosamine transferase (359 aa).

UDP-N-acetyl-alpha-D-glucosamine contacts are provided by residues 15–17, Asn127, Arg166, Ser191, Ile245, 264–269, and Gln290; these read TGG and ALTVSE.

The protein belongs to the glycosyltransferase 28 family. MurG subfamily.

Its subcellular location is the cell inner membrane. The enzyme catalyses di-trans,octa-cis-undecaprenyl diphospho-N-acetyl-alpha-D-muramoyl-L-alanyl-D-glutamyl-meso-2,6-diaminopimeloyl-D-alanyl-D-alanine + UDP-N-acetyl-alpha-D-glucosamine = di-trans,octa-cis-undecaprenyl diphospho-[N-acetyl-alpha-D-glucosaminyl-(1-&gt;4)]-N-acetyl-alpha-D-muramoyl-L-alanyl-D-glutamyl-meso-2,6-diaminopimeloyl-D-alanyl-D-alanine + UDP + H(+). Its pathway is cell wall biogenesis; peptidoglycan biosynthesis. Cell wall formation. Catalyzes the transfer of a GlcNAc subunit on undecaprenyl-pyrophosphoryl-MurNAc-pentapeptide (lipid intermediate I) to form undecaprenyl-pyrophosphoryl-MurNAc-(pentapeptide)GlcNAc (lipid intermediate II). In Pseudomonas entomophila (strain L48), this protein is UDP-N-acetylglucosamine--N-acetylmuramyl-(pentapeptide) pyrophosphoryl-undecaprenol N-acetylglucosamine transferase.